The following is a 234-amino-acid chain: Cytochrome b (234 aa).

4 helical membrane passes run 33 to 53 (FGSLLGLCLMIQILTGLFLAM), 77 to 98 (WLIRYLHANGASMFFICLYMHV), 113 to 133 (WNIGIILLFAVMATAFMGYVL), and 178 to 198 (FFAFHFILPFIIAALVMIHLL). 2 residues coordinate heme b: His83 and His97. Heme b is bound by residues His182 and His196. His201 lines the a ubiquinone pocket. A helical membrane pass occupies residues 226 to 234 (IKDLLGFLV).

This sequence belongs to the cytochrome b family. As to quaternary structure, the cytochrome bc1 complex contains 11 subunits: 3 respiratory subunits (MT-CYB, CYC1 and UQCRFS1), 2 core proteins (UQCRC1 and UQCRC2) and 6 low-molecular weight proteins (UQCRH/QCR6, UQCRB/QCR7, UQCRQ/QCR8, UQCR10/QCR9, UQCR11/QCR10 and a cleavage product of UQCRFS1). This cytochrome bc1 complex then forms a dimer. Requires heme b as cofactor.

It localises to the mitochondrion inner membrane. Component of the ubiquinol-cytochrome c reductase complex (complex III or cytochrome b-c1 complex) that is part of the mitochondrial respiratory chain. The b-c1 complex mediates electron transfer from ubiquinol to cytochrome c. Contributes to the generation of a proton gradient across the mitochondrial membrane that is then used for ATP synthesis. In Lepus arcticus (Arctic hare), this protein is Cytochrome b (MT-CYB).